The chain runs to 58 residues: MEKVILEHLQRIEKQLEILNSKIENFLGFEELSEEELKELDEIEAKMEKGEKFVLNDV.

Residues 3 to 52 (KVILEHLQRIEKQLEILNSKIENFLGFEELSEEELKELDEIEAKMEKGEK) adopt a coiled-coil conformation.

This is an uncharacterized protein from Archaeoglobus fulgidus (strain ATCC 49558 / DSM 4304 / JCM 9628 / NBRC 100126 / VC-16).